The primary structure comprises 315 residues: D-alanine--D-alanine ligase (315 aa).

Positions 101–297 constitute an ATP-grasp domain; that stretch reads KHIFRSLNID…FNELVKIIIE (197 aa). 128–181 serves as a coordination point for ATP; that stretch reads KIDYPYVLKPINEGSSIGVYIIFSHEDYLELKNNSSTIMEKMIVEEYIPGIELH. Asp249, Glu263, and Asn265 together coordinate Mg(2+).

The protein belongs to the D-alanine--D-alanine ligase family. Requires Mg(2+) as cofactor. Mn(2+) serves as cofactor.

It localises to the cytoplasm. It catalyses the reaction 2 D-alanine + ATP = D-alanyl-D-alanine + ADP + phosphate + H(+). It participates in cell wall biogenesis; peptidoglycan biosynthesis. In terms of biological role, cell wall formation. The sequence is that of D-alanine--D-alanine ligase from Wolbachia pipientis wMel.